The primary structure comprises 272 residues: Heat stress transcription factor A-7a (272 aa).

The segment at 1 to 26 (MMNPFLPEGCDPPPPPQPMEGLHENA) is disordered. A DNA-binding region spans residues 27–121 (PPPFLTKTFE…LLKNIKRRNP (95 aa)). The hydrophobic repeat HR-A/B stretch occupies residues 132–186 (ACNELRREKQVLMMEIVSLRQQQQTTKSYIKAMEQRIEGTERKQRQMMSFLARAM). A Bipartite nuclear localization signal motif is present at residues 201 to 216 (KKIKELEDNESAKRKR). Over residues 203-212 (IKELEDNESA) the composition is skewed to basic and acidic residues. The tract at residues 203–223 (IKELEDNESAKRKRGSSSMSE) is disordered. The AHA motif lies at 256–265 (DGFWEELLSD).

This sequence belongs to the HSF family. Class A subfamily. Homotrimer. Exhibits temperature-dependent phosphorylation.

It is found in the nucleus. Its function is as follows. Transcriptional activator that specifically binds DNA sequence 5'-AGAAnnTTCT-3' known as heat shock promoter elements (HSE). The polypeptide is Heat stress transcription factor A-7a (HSFA7A) (Arabidopsis thaliana (Mouse-ear cress)).